A 100-amino-acid polypeptide reads, in one-letter code: Large ribosomal subunit protein bL27 (100 aa).

A propeptide spanning residues methionine 1–phenylalanine 13 is cleaved from the precursor. Residues lysine 17–aspartate 39 are disordered.

It belongs to the bacterial ribosomal protein bL27 family. In terms of processing, the N-terminus is cleaved by ribosomal processing cysteine protease Prp.

The chain is Large ribosomal subunit protein bL27 from Ureaplasma parvum serovar 3 (strain ATCC 700970).